The primary structure comprises 205 residues: LexA repressor (205 aa).

The H-T-H motif DNA-binding region spans 28 to 48 (RAEIAKRLGFKSANAAEEHLK). Active-site for autocatalytic cleavage activity residues include serine 122 and lysine 159.

Belongs to the peptidase S24 family. As to quaternary structure, homodimer.

It carries out the reaction Hydrolysis of Ala-|-Gly bond in repressor LexA.. In terms of biological role, represses a number of genes involved in the response to DNA damage (SOS response), including recA and lexA. In the presence of single-stranded DNA, RecA interacts with LexA causing an autocatalytic cleavage which disrupts the DNA-binding part of LexA, leading to derepression of the SOS regulon and eventually DNA repair. The polypeptide is LexA repressor (Shewanella woodyi (strain ATCC 51908 / MS32)).